We begin with the raw amino-acid sequence, 113 residues long: Iron-sulfur cluster insertion protein ErpA (113 aa).

The iron-sulfur cluster site is built by C41, C105, and C107.

The protein belongs to the HesB/IscA family. As to quaternary structure, homodimer. Requires iron-sulfur cluster as cofactor.

Required for insertion of 4Fe-4S clusters for at least IspG. This is Iron-sulfur cluster insertion protein ErpA from Histophilus somni (strain 129Pt) (Haemophilus somnus).